The chain runs to 509 residues: Putative cytochrome P450 CYP13A8 (509 aa).

A heme-binding site is contributed by C455.

The protein belongs to the cytochrome P450 family. The cofactor is heme.

Cytochromes P450 are a group of heme-thiolate monooxygenases. They oxidize a variety of structurally unrelated compounds, including steroids, fatty acids, and xenobiotics. In Caenorhabditis elegans, this protein is Putative cytochrome P450 CYP13A8 (cyp-13A8).